The primary structure comprises 121 residues: Large ribosomal subunit protein bL19 (121 aa).

It belongs to the bacterial ribosomal protein bL19 family.

In terms of biological role, this protein is located at the 30S-50S ribosomal subunit interface and may play a role in the structure and function of the aminoacyl-tRNA binding site. In Chlorobaculum tepidum (strain ATCC 49652 / DSM 12025 / NBRC 103806 / TLS) (Chlorobium tepidum), this protein is Large ribosomal subunit protein bL19.